The primary structure comprises 186 residues: Protein C (186 aa).

Residues 1–15 (MSKTDWNASGLSRPS) are compositionally biased toward polar residues. The segment at 1–44 (MSKTDWNASGLSRPSPSAHWPSRKLWQHGQKYQTTQDRSEPPAG) is disordered.

It belongs to the morbillivirus protein C family. In terms of assembly, interacts with the phosphoprotein (via C-terminus); this interaction allows C to associate with the ribonucleocapsid.

The protein resides in the host nucleus. The protein localises to the host cytoplasmic vesicle. Functionally, ribonucleocapsid-associated protein that interacts with the phosphoprotein (P), thereby increasing replication accuracy and processivity of the polymerase complex. The polypeptide is Protein C (P/V/C) (Homo sapiens (Human)).